The following is a 450-amino-acid chain: Putative cysteine--tRNA ligase 2 (450 aa).

The 'HIGH' region motif lies at 29 to 39 (ITPYKSTHLGH). A 'KMSKS' region motif is present at residues 270–274 (KMSKS). K273 is an ATP binding site. The tract at residues 372–392 (PIHPKHSPQMRDYSEHGSAGQ) is disordered.

It belongs to the class-I aminoacyl-tRNA synthetase family. As to quaternary structure, monomer.

It is found in the cytoplasm. The enzyme catalyses tRNA(Cys) + L-cysteine + ATP = L-cysteinyl-tRNA(Cys) + AMP + diphosphate. In Tropheryma whipplei (strain TW08/27) (Whipple's bacillus), this protein is Putative cysteine--tRNA ligase 2 (cysS2).